An 89-amino-acid chain; its full sequence is Teretoxin Tan6.8 (89 aa).

The signal sequence occupies residues 1–21; the sequence is MRLLLILLLLTPVILAGSLDE. Residues 22–42 are disordered; the sequence is EPNNADGANAASFTADQEGRH. The propeptide occupies 22–44; the sequence is EPNNADGANAASFTADQEGRHKR.

In terms of processing, contains 3 disulfide bonds. Expressed by the venom duct.

Its subcellular location is the secreted. The polypeptide is Teretoxin Tan6.8 (Terebra anilis (Auger snail)).